The primary structure comprises 383 residues: Insulinoma-associated protein 1a (383 aa).

The interval 1–20 (MPRGFLVKRNKKATPVSYRV) is SNAG domain. Disordered regions lie at residues 99–141 (PVDL…AMRK) and 229–269 (RWHK…SEDG). The segment covering 105-120 (GTSNSNRTGTTVTTKR) has biased composition (polar residues). The segment covering 130–140 (KPASKKAKAMR) has biased composition (basic residues). The segment at 209–231 (YRCPECDKLFSCPANLASHRRWH) adopts a C2H2-type 1 zinc-finger fold. Residues 244 to 256 (APEKEETSSDRDT) show a composition bias toward basic and acidic residues. The C2H2-type 2; degenerate zinc-finger motif lies at 271 to 295 (YDCQHCGKKFKRQAYLKKHVTAHHD). C2H2-type zinc fingers lie at residues 314-337 (HLCP…RLQH) and 342-365 (YPCK…NKCH).

This sequence belongs to the INSM1 family.

It localises to the nucleus. Its function is as follows. May act as a transcriptional regulator. May play a role in neurogenesis and neuroendocrine cell differentiation during embryonic development. The sequence is that of Insulinoma-associated protein 1a (insm1a) from Danio rerio (Zebrafish).